The sequence spans 462 residues: MQEGKISQIIGPVVDVDFPEGRLPSILDALTVKREDGSKLVLETQQHLGEERVRTVAMESTDGLVRGMGVVNTGAAIQVPVGAEVLGRMLNVVGDPIDGRGPVNSKKTYSIHRSAPKFEDISTKAEMFETGIKVIDLLEPYSRGGKTGLFGGAGVGKTVLIMELINNIAKQQSGFSVFAGVGERTREGNDLWHEMMESGVIDKTALVFGQMNEPPGARQRVALTGLSIAEYFRDEENRDVLLFVDNIFRFTQAGSEVSALLGRMPSAVGYQPTLATEMGQLQDRIVSTKKGSVTSVQAIYVPADDLTDPAPATAFTHLDATTVLSRSIAELGIYPAVDPLDSTSRILDPNVVGDDHYNTAQAVKQLLQRYKDLQDIIAILGMDELSDEDKLVVSRARKVQRFLSQPFFVAEAFTGLAGKYVKLEDTIKGFKEIIAGKHDKLPENAFYLVGTIEEAIEKAKTL.

151–158 (GGAGVGKT) is a binding site for ATP.

Belongs to the ATPase alpha/beta chains family. As to quaternary structure, F-type ATPases have 2 components, CF(1) - the catalytic core - and CF(0) - the membrane proton channel. CF(1) has five subunits: alpha(3), beta(3), gamma(1), delta(1), epsilon(1). CF(0) has four main subunits: a(1), b(1), b'(1) and c(9-12).

It is found in the cell inner membrane. The enzyme catalyses ATP + H2O + 4 H(+)(in) = ADP + phosphate + 5 H(+)(out). Functionally, produces ATP from ADP in the presence of a proton gradient across the membrane. The catalytic sites are hosted primarily by the beta subunits. The polypeptide is ATP synthase subunit beta (Chlorobium chlorochromatii (strain CaD3)).